We begin with the raw amino-acid sequence, 240 residues long: uncharacterized protein (240 aa).

Residues 26-52 (DYVDDGESLPTRQSVKNQREQKKKQGK) are disordered. Residues 57 to 77 (LFTVLAVIFVFVPVIVLVTLF) form a helical membrane-spanning segment. The interval 100–185 (KYEVVPKSED…QPAEPVQNVP (86 aa)) is disordered. Over residues 103-159 (VVPKSEDKNDTADTKETALQKESKKEPEDSKPKEQTAADKKQTAVAEKEDSPNKEEA) the composition is skewed to basic and acidic residues. A compositionally biased stretch (low complexity) spans 160-185 (TAAAASSSQSTVQQQEQPAEPVQNVP). Positions 189-235 (VKHTVQKKETLYRISMKYYKSRTGEEKIRAYNHLNGNDVYTGQVLDI) constitute a LysM domain.

The protein localises to the membrane. This is an uncharacterized protein from Bacillus subtilis (strain 168).